A 463-amino-acid polypeptide reads, in one-letter code: Glutamate--tRNA ligase (463 aa).

A 'HIGH' region motif is present at residues 9 to 19 (PSPTGYLHVGG). Positions 115–129 (AGEKPRYDGTWRPEA) are enriched in basic and acidic residues. Residues 115-136 (AGEKPRYDGTWRPEAGKTLPAI) are disordered. The short motif at 241–245 (KLSKR) is the 'KMSKS' region element. Lysine 244 lines the ATP pocket.

This sequence belongs to the class-I aminoacyl-tRNA synthetase family. Glutamate--tRNA ligase type 1 subfamily. In terms of assembly, monomer.

The protein localises to the cytoplasm. It catalyses the reaction tRNA(Glu) + L-glutamate + ATP = L-glutamyl-tRNA(Glu) + AMP + diphosphate. Catalyzes the attachment of glutamate to tRNA(Glu) in a two-step reaction: glutamate is first activated by ATP to form Glu-AMP and then transferred to the acceptor end of tRNA(Glu). This chain is Glutamate--tRNA ligase, found in Janthinobacterium sp. (strain Marseille) (Minibacterium massiliensis).